The following is a 275-amino-acid chain: Non-heme chloroperoxidase CPO-A1 (275 aa).

Residues 22–255 form the AB hydrolase-1 domain; sequence PVVFIHGWPL…KVYEGSSHGI (234 aa). Catalysis depends on charge relay system residues serine 95, aspartate 224, and histidine 253.

Belongs to the AB hydrolase superfamily. Bacterial non-heme haloperoxidase / perhydrolase family. Homodimer.

Brominating activity not inhibited by azide, peroxidase activity stimulated by bromide. May be a chlorinating enzyme involved in 7-chlorotetracycline biosynthesis. Able to brominate as well. The polypeptide is Non-heme chloroperoxidase CPO-A1 (bpoA1) (Kitasatospora aureofaciens (Streptomyces aureofaciens)).